The following is a 103-amino-acid chain: c-Myc-binding protein (103 aa).

This sequence belongs to the AMY1 family. In terms of assembly, binds via its C-terminal region to the N-terminal region of MYC. Associates with AKAP1/S-AKAP84. Interacts with MYCBPAP. Interacts with CFAP91.

It is found in the cytoplasm. Its subcellular location is the nucleus. Functionally, may control the transcriptional activity of MYC. Stimulates the activation of E box-dependent transcription by MYC. The polypeptide is c-Myc-binding protein (Mycbp) (Mus musculus (Mouse)).